The chain runs to 151 residues: 1,4-dihydroxy-2-naphthoyl-CoA hydrolase (151 aa).

Asp19 is an active-site residue.

This sequence belongs to the 4-hydroxybenzoyl-CoA thioesterase family. DHNA-CoA hydrolase subfamily.

It catalyses the reaction 1,4-dihydroxy-2-naphthoyl-CoA + H2O = 1,4-dihydroxy-2-naphthoate + CoA + H(+). It participates in cofactor biosynthesis; phylloquinone biosynthesis. It functions in the pathway quinol/quinone metabolism; 1,4-dihydroxy-2-naphthoate biosynthesis; 1,4-dihydroxy-2-naphthoate from chorismate: step 7/7. Catalyzes the hydrolysis of 1,4-dihydroxy-2-naphthoyl-CoA (DHNA-CoA) to 1,4-dihydroxy-2-naphthoate (DHNA), a reaction involved in phylloquinone (vitamin K1) biosynthesis. In Prochlorococcus marinus (strain MIT 9303), this protein is 1,4-dihydroxy-2-naphthoyl-CoA hydrolase.